The chain runs to 182 residues: Large ribosomal subunit protein uL5 (182 aa).

Belongs to the universal ribosomal protein uL5 family. In terms of assembly, part of the 50S ribosomal subunit; part of the 5S rRNA/L5/L18/L25 subcomplex. Contacts the 5S rRNA and the P site tRNA. Forms a bridge to the 30S subunit in the 70S ribosome.

In terms of biological role, this is one of the proteins that bind and probably mediate the attachment of the 5S RNA into the large ribosomal subunit, where it forms part of the central protuberance. In the 70S ribosome it contacts protein S13 of the 30S subunit (bridge B1b), connecting the 2 subunits; this bridge is implicated in subunit movement. Contacts the P site tRNA; the 5S rRNA and some of its associated proteins might help stabilize positioning of ribosome-bound tRNAs. The sequence is that of Large ribosomal subunit protein uL5 from Thermus aquaticus.